Consider the following 429-residue polypeptide: Serum response factor-binding protein 1 (429 aa).

At Ala-2 the chain carries N-acetylalanine. 2 coiled-coil regions span residues 42-67 (KGTEDALLKNQRRAQRLLEEIHAMKE) and 108-146 (LLKKKIDVLKAAVQAFKEARQNVAEVESSKNASEDNHSE). Disordered stretches follow at residues 131–157 (AEVESSKNASEDNHSENTLYSNDNGSN) and 176–429 (LAKK…TFDD). Over residues 146-157 (ENTLYSNDNGSN) the composition is skewed to polar residues. The segment covering 183–195 (NSKEKIAKMEHGP) has biased composition (basic and acidic residues). A Glycyl lysine isopeptide (Lys-Gly) (interchain with G-Cter in SUMO2) cross-link involves residue Lys-190. Phosphoserine occurs at positions 203, 205, 264, 279, and 281. The segment covering 249 to 265 (GGEEFCEEEKEYFDDST) has biased composition (acidic residues). Residues 296–341 (KESSCHSSVKEQKPLEKVFLKEDTGETHGDTRNDKIKPSTETRKLE) show a composition bias toward basic and acidic residues. Residue Lys-316 forms a Glycyl lysine isopeptide (Lys-Gly) (interchain with G-Cter in SUMO2) linkage. 3 positions are modified to phosphoserine: Ser-349, Ser-351, and Ser-367. A compositionally biased stretch (basic and acidic residues) spans 357 to 367 (NFKEQAPKTRS). Residues 373-383 (NEPQIKNQFNK) show a composition bias toward polar residues.

As to quaternary structure, interacts with SRF. Forms complexes with SRF and SRF cofactors ARID2, MYOCD and NKX2-5. Interacts with the N-terminus of SLC2A4. As to expression, abundantly expressed in heart and skeletal muscle, and at much lower levels in brain and lung.

The protein localises to the cytoplasm. It is found in the perinuclear region. May be involved in regulating transcriptional activation of cardiac genes during the aging process. May play a role in biosynthesis and/or processing of SLC2A4 in adipose cells. This chain is Serum response factor-binding protein 1, found in Homo sapiens (Human).